The sequence spans 93 residues: UPF0358 protein RBAM_014700 (93 aa).

Belongs to the UPF0358 family.

The chain is UPF0358 protein RBAM_014700 from Bacillus velezensis (strain DSM 23117 / BGSC 10A6 / LMG 26770 / FZB42) (Bacillus amyloliquefaciens subsp. plantarum).